Here is a 344-residue protein sequence, read N- to C-terminus: Oxygen sensor histidine kinase NreB (344 aa).

[4Fe-4S] cluster is bound by residues Cys58, Cys61, Cys73, and Cys76. The Histidine kinase domain maps to 152–344 (RISRELHDSV…GTNVTLNIPI (193 aa)). A Phosphohistidine; by autocatalysis modification is found at His158.

[4Fe-4S] cluster serves as cofactor. Autophosphorylated.

It is found in the cytoplasm. The enzyme catalyses ATP + protein L-histidine = ADP + protein N-phospho-L-histidine.. In terms of biological role, member of the two-component regulatory system NreB/NreC involved in the control of dissimilatory nitrate/nitrite reduction in response to oxygen. NreB functions as a direct oxygen sensor histidine kinase which is autophosphorylated, in the absence of oxygen, probably at the conserved histidine residue, and transfers its phosphate group probably to a conserved aspartate residue of NreC. NreB/NreC activates the expression of the nitrate (narGHJI) and nitrite (nir) reductase operons, as well as the putative nitrate transporter gene narT. This chain is Oxygen sensor histidine kinase NreB (nreB), found in Staphylococcus aureus (strain JH1).